Consider the following 320-residue polypeptide: Transcription factor bHLH96 (320 aa).

The disordered stretch occupies residues 30–121; that stretch reads EEEDQDPQDT…RSSKNKEEIE (92 aa). Positions 65–76 are enriched in acidic residues; it reads YSDDYNYNEEDL. Residues 104-114 are compositionally biased toward basic residues; sequence GRRKRRRTRSS. The bHLH domain maps to 122–173; sequence NQRMTHIAVERNRRKQMNEYLAVLRSLMPPYYAQRGDQASIVGGAINYLKEL. Residues 184–206 form a disordered region; that stretch reads VKTATEDTGAGHDQTKTTSASSS. An ACT domain is found at 244 to 320; it reads SLKILAKKRP…RRIEEESSFS (77 aa).

Homodimer. In terms of tissue distribution, expressed constitutively in roots, leaves, stems, and flowers.

It is found in the nucleus. This chain is Transcription factor bHLH96 (BHLH96), found in Arabidopsis thaliana (Mouse-ear cress).